Consider the following 156-residue polypeptide: Small ribosomal subunit protein uS7 (156 aa).

This sequence belongs to the universal ribosomal protein uS7 family. As to quaternary structure, part of the 30S ribosomal subunit. Contacts proteins S9 and S11.

Its function is as follows. One of the primary rRNA binding proteins, it binds directly to 16S rRNA where it nucleates assembly of the head domain of the 30S subunit. Is located at the subunit interface close to the decoding center, probably blocks exit of the E-site tRNA. This is Small ribosomal subunit protein uS7 from Treponema pallidum (strain Nichols).